We begin with the raw amino-acid sequence, 210 residues long: Large ribosomal subunit protein uL3 (210 aa).

The span at 132 to 144 (GPMKHGSKYHRRP) shows a compositional bias: basic residues. The disordered stretch occupies residues 132-152 (GPMKHGSKYHRRPGSAGAKGP).

Belongs to the universal ribosomal protein uL3 family. Part of the 50S ribosomal subunit. Forms a cluster with proteins L14 and L19.

One of the primary rRNA binding proteins, it binds directly near the 3'-end of the 23S rRNA, where it nucleates assembly of the 50S subunit. This chain is Large ribosomal subunit protein uL3, found in Heliobacterium modesticaldum (strain ATCC 51547 / Ice1).